Consider the following 433-residue polypeptide: Poly(A) ribonuclease POP2 (433 aa).

M1 is modified (N-acetylmethionine). Residues 78 to 98 (LLTQQQQQQQQQQQPFNIGTP) are disordered. Over residues 81–91 (QQQQQQQQQQQ) the composition is skewed to low complexity. At T97 the chain carries Phosphothreonine; by YAK1. Residues S188, E190, D310, and Q394 each contribute to the a divalent metal cation site.

The protein belongs to the CAF1 family. Subunit of the 1.0 MDa CCR4-NOT core complex that contains CCR4, CAF1, NOT1, NOT2, NOT3, NOT4, NOT5, CAF40 and CAF130. In the complex interacts with NOT1. The core complex probably is part of a less characterized 1.9 MDa CCR4-NOT complex. Requires Mg(2+) as cofactor.

It localises to the cytoplasm. It is found in the nucleus. It catalyses the reaction Exonucleolytic cleavage of poly(A) to 5'-AMP.. Acts as a probably catalytic component of the CCR4-NOT core complex, which in the nucleus seems to be a general transcription factor, and in the cytoplasm the major mRNA deadenylase involved in mRNA turnover. In vitro, POP2 has 3'-exoribonuclease activity with a preference for poly(A) RNAs, but also degrades poly(U) and poly(C) RNAs. Is part of a glucose-sensing system involved in growth control in response to glucose availability. The protein is Poly(A) ribonuclease POP2 (POP2) of Saccharomyces cerevisiae (strain ATCC 204508 / S288c) (Baker's yeast).